A 195-amino-acid polypeptide reads, in one-letter code: E3 ubiquitin-protein ligase ZNRF1 (195 aa).

The segment covering 1 to 10 (MGGKQSSASR) has biased composition (polar residues). Disordered regions lie at residues 1 to 36 (MGGKQSSASRSRAPFPGVSSDDSAVPPSSNFGHFRA) and 61 to 84 (PFGLYRAGPDTERGGSSGSEDSRG). Gly-2 carries N-myristoyl glycine lipidation. Over residues 18 to 29 (VSSDDSAVPPSS) the composition is skewed to low complexity. The RING-type; atypical zinc-finger motif lies at 152-193 (CVICLEELSQGDTIARLPCLCIYHKSCIDSWFEVNRCCPEHP).

Its subcellular location is the endosome. It localises to the lysosome. The protein localises to the membrane. It catalyses the reaction S-ubiquitinyl-[E2 ubiquitin-conjugating enzyme]-L-cysteine + [acceptor protein]-L-lysine = [E2 ubiquitin-conjugating enzyme]-L-cysteine + N(6)-ubiquitinyl-[acceptor protein]-L-lysine.. The protein operates within protein modification; protein ubiquitination. Its function is as follows. E3 ubiquitin-protein ligase that plays a role in neuron cells differentiation. Plays a role in the establishment and maintenance of neuronal transmission and plasticity. In Xenopus tropicalis (Western clawed frog), this protein is E3 ubiquitin-protein ligase ZNRF1 (znrf1).